Reading from the N-terminus, the 127-residue chain is Fluoride-specific ion channel FluC (127 aa).

The next 4 membrane-spanning stretches (helical) occupy residues 3 to 23 (ALLL…LLGV), 36 to 56 (GTFA…GGLA), 72 to 92 (VGAL…ALMI), and 101 to 121 (FAYS…GLLL). Positions 76 and 79 each coordinate Na(+).

The protein belongs to the fluoride channel Fluc/FEX (TC 1.A.43) family.

The protein resides in the cell inner membrane. It catalyses the reaction fluoride(in) = fluoride(out). Na(+) is not transported, but it plays an essential structural role and its presence is essential for fluoride channel function. Its function is as follows. Fluoride-specific ion channel. Important for reducing fluoride concentration in the cell, thus reducing its toxicity. The chain is Fluoride-specific ion channel FluC from Phenylobacterium zucineum (strain HLK1).